Reading from the N-terminus, the 99-residue chain is UPF0473 protein Athe_1150 (99 aa).

The protein belongs to the UPF0473 family.

In Caldicellulosiruptor bescii (strain ATCC BAA-1888 / DSM 6725 / KCTC 15123 / Z-1320) (Anaerocellum thermophilum), this protein is UPF0473 protein Athe_1150.